Here is a 110-residue protein sequence, read N- to C-terminus: MLEKTTRMNYLFDFYQSLLTQKQRSYMSLYYLDDLSLGEIAEEFDVSRQAVYDNIKRTEAMLEEYEDKLVLLQKFQERQRLVAKLKQLISEEEHVNEEMKQVVEAIEKLD.

This sequence belongs to the UPF0122 family.

Might take part in the signal recognition particle (SRP) pathway. This is inferred from the conservation of its genetic proximity to ftsY/ffh. May be a regulatory protein. The polypeptide is UPF0122 protein BCA_3946 (Bacillus cereus (strain 03BB102)).